Consider the following 442-residue polypeptide: ATP-dependent protease ATPase subunit HslU (442 aa).

ATP contacts are provided by residues Ile18 and 60–65 (GVGKTE). The segment at 133-156 (DALLPKPKNDWDNTDSDTSSNTRQ) is disordered. 3 residues coordinate ATP: Asp255, Glu320, and Arg392.

The protein belongs to the ClpX chaperone family. HslU subfamily. A double ring-shaped homohexamer of HslV is capped on each side by a ring-shaped HslU homohexamer. The assembly of the HslU/HslV complex is dependent on binding of ATP.

The protein localises to the cytoplasm. Functionally, ATPase subunit of a proteasome-like degradation complex; this subunit has chaperone activity. The binding of ATP and its subsequent hydrolysis by HslU are essential for unfolding of protein substrates subsequently hydrolyzed by HslV. HslU recognizes the N-terminal part of its protein substrates and unfolds these before they are guided to HslV for hydrolysis. The protein is ATP-dependent protease ATPase subunit HslU of Shewanella sp. (strain ANA-3).